Here is a 179-residue protein sequence, read N- to C-terminus: HTH-type transcriptional regulator AldR (179 aa).

Residues 32 to 93 (LDEVDRRILS…DIDPVAVGLP (62 aa)) form the HTH asnC-type domain. The H-T-H motif DNA-binding region spans 51–70 (NNALADTVGIAPSTCHGRVR).

As to quaternary structure, homooctamer. Homotetramer. Tetramer of dimers. The N-terminal DNA-binding domains are swapped, forming a dimer, and four dimers are assembled into an octamer through crystal symmetry.

With respect to regulation, the DNA-binding activity of AldR is modulated by interaction of AldR with various amino acids. Alanine, tryptophan, tyrosine and aspartate completely abolish the DNA binding ability of AldR. On the other hand, glutamate and asparagine reduce AldR binding to DNA but do not completely abolish it. Binding of amino acids can lead to structural modifications and changes in oligomeric association. Activity is also inhibited by 3 small molecule inhibitors, tetrahydroquinoline carbonitrile derivative (S010-0261), levothyroxine and liothyronine, which can disrupt the AldR-DNA complex. Its function is as follows. Transcriptional regulator that might play a role under hypoxic conditions. Regulates the expression of ald, which encodes L-alanine dehydrogenase. Serves as both an activator for ald expression in the presence of L-alanine and a repressor in the absence of L-alanine. Acts by binding directly to the upstream region of the ald gene. Four AldR-binding sites (O2, O1, O4 and O3) were identified upstream of the ald gene. O2, O1 and O4 are required for the induction of ald expression by alanine, while O3 is directly involved in the repression of ald expression, by occluding the access of RNA polymerase to the ald promoter. In addition to O3, both O1 and O4 are also necessary for full repression of ald expression in the absence of alanine. This is HTH-type transcriptional regulator AldR from Mycobacterium tuberculosis (strain ATCC 25618 / H37Rv).